Reading from the N-terminus, the 262-residue chain is ATP synthase subunit a (262 aa).

The next 5 helical transmembrane spans lie at 26–46 (VHIDTLFFSILAAVIFLFVFS), 86–106 (VAPLALTIFCWVFIMNAIDLI), 130–150 (DISATLGMSICVFFLILFYTI), 204–226 (LIFILIAVMYSANMAIAALGIPL), and 240–260 (LQAFIFMMLTVVYLSIAYNKA).

This sequence belongs to the ATPase A chain family. In terms of assembly, F-type ATPases have 2 components, CF(1) - the catalytic core - and CF(0) - the membrane proton channel. CF(1) has five subunits: alpha(3), beta(3), gamma(1), delta(1), epsilon(1). CF(0) has three main subunits: a(1), b(2) and c(9-12). The alpha and beta chains form an alternating ring which encloses part of the gamma chain. CF(1) is attached to CF(0) by a central stalk formed by the gamma and epsilon chains, while a peripheral stalk is formed by the delta and b chains.

The protein localises to the cell inner membrane. Functionally, key component of the proton channel; it plays a direct role in the translocation of protons across the membrane. The chain is ATP synthase subunit a from Haemophilus influenzae (strain PittEE).